We begin with the raw amino-acid sequence, 332 residues long: L-lactate dehydrogenase A chain (332 aa).

Residues 29–57 (GAVG…VEDK) and Arg99 contribute to the NAD(+) site. Residues Arg106, Asn138, and Arg169 each contribute to the substrate site. Asn138 contributes to the NAD(+) binding site. His193 (proton acceptor) is an active-site residue. Position 248 (Thr248) interacts with substrate.

The protein belongs to the LDH/MDH superfamily. LDH family. As to quaternary structure, homotetramer.

The protein resides in the cytoplasm. It catalyses the reaction (S)-lactate + NAD(+) = pyruvate + NADH + H(+). Its pathway is fermentation; pyruvate fermentation to lactate; (S)-lactate from pyruvate: step 1/1. Functionally, interconverts simultaneously and stereospecifically pyruvate and lactate with concomitant interconversion of NADH and NAD(+). This chain is L-lactate dehydrogenase A chain (LDHA), found in Caiman crocodilus apaporiensis (Rio Apaporis caiman).